A 351-amino-acid polypeptide reads, in one-letter code: MKKKKLLVMAGGTGGHVFPAIAVAQTLQKQEWDICWLGTKDRMEAQLVPKYDIPIRFIQISGLRGKGIKALFNAPFAIFRAVLQAKKIIQEEKPDAVLGMGGYVSGPAGVAAKLCGVPIILHEQNAIAGLTNKLLGKIASCVLQAFPTAFSNAEVVGNPVREDLFEMPNPDIRFSDREEKLRVLVVGGSQGARVLNHTLPKVVAQIADKLEVRHQVGKGAVEEVRQLYGENLEQVKITEFIDNMAEAYAWADVVICRSGALTVCEIAAVGAAAIFVPFQHKDRQQYLNAKYLSDVGAAKIIEQADLTPEILVNSLKNFTRENLLQMALKAKTMSMPNAAQRVAEVIKQYSN.

Residues 13–15 (TGG), Asn-125, Arg-161, Ser-189, Ile-241, 260–265 (ALTVCE), and Gln-285 contribute to the UDP-N-acetyl-alpha-D-glucosamine site.

This sequence belongs to the glycosyltransferase 28 family. MurG subfamily.

Its subcellular location is the cell inner membrane. It carries out the reaction di-trans,octa-cis-undecaprenyl diphospho-N-acetyl-alpha-D-muramoyl-L-alanyl-D-glutamyl-meso-2,6-diaminopimeloyl-D-alanyl-D-alanine + UDP-N-acetyl-alpha-D-glucosamine = di-trans,octa-cis-undecaprenyl diphospho-[N-acetyl-alpha-D-glucosaminyl-(1-&gt;4)]-N-acetyl-alpha-D-muramoyl-L-alanyl-D-glutamyl-meso-2,6-diaminopimeloyl-D-alanyl-D-alanine + UDP + H(+). It participates in cell wall biogenesis; peptidoglycan biosynthesis. In terms of biological role, cell wall formation. Catalyzes the transfer of a GlcNAc subunit on undecaprenyl-pyrophosphoryl-MurNAc-pentapeptide (lipid intermediate I) to form undecaprenyl-pyrophosphoryl-MurNAc-(pentapeptide)GlcNAc (lipid intermediate II). This is UDP-N-acetylglucosamine--N-acetylmuramyl-(pentapeptide) pyrophosphoryl-undecaprenol N-acetylglucosamine transferase from Haemophilus influenzae (strain PittEE).